The primary structure comprises 476 residues: Glycogen synthase (476 aa).

An ADP-alpha-D-glucose-binding site is contributed by K15.

The protein belongs to the glycosyltransferase 1 family. Bacterial/plant glycogen synthase subfamily.

The catalysed reaction is [(1-&gt;4)-alpha-D-glucosyl](n) + ADP-alpha-D-glucose = [(1-&gt;4)-alpha-D-glucosyl](n+1) + ADP + H(+). Its pathway is glycan biosynthesis; glycogen biosynthesis. Synthesizes alpha-1,4-glucan chains using ADP-glucose. This is Glycogen synthase from Haemophilus influenzae (strain 86-028NP).